A 354-amino-acid polypeptide reads, in one-letter code: Selenide, water dikinase (354 aa).

Cysteine 23 is a catalytic residue. Residues lysine 26 and 54-56 (TSD) contribute to the ATP site. Aspartate 57 serves as a coordination point for Mg(2+). Residues aspartate 74, aspartate 97, and 145–147 (GHS) contribute to the ATP site. Residue aspartate 97 participates in Mg(2+) binding. Aspartate 233 provides a ligand contact to Mg(2+).

It belongs to the selenophosphate synthase 1 family. Class I subfamily. Homodimer. The cofactor is Mg(2+).

The enzyme catalyses hydrogenselenide + ATP + H2O = selenophosphate + AMP + phosphate + 2 H(+). Functionally, synthesizes selenophosphate from selenide and ATP. The polypeptide is Selenide, water dikinase (Burkholderia cenocepacia (strain ATCC BAA-245 / DSM 16553 / LMG 16656 / NCTC 13227 / J2315 / CF5610) (Burkholderia cepacia (strain J2315))).